The chain runs to 472 residues: F420-non-reducing hydrogenase subunit A (472 aa).

Residues C61, C64, C442, and C445 each contribute to the Ni(2+) site.

Belongs to the [NiFe]/[NiFeSe] hydrogenase large subunit family. As to quaternary structure, the F420-non-reducing hydrogenase is composed of three subunits; MvhA, MvhD and MvhG. It forms a complex with the heterodisulfide reductase (hdr). Ni(2+) is required as a cofactor.

Its function is as follows. Part of a complex that provides reducing equivalents for heterodisulfide reductase. The chain is F420-non-reducing hydrogenase subunit A (mvhA) from Methanothermobacter marburgensis (strain ATCC BAA-927 / DSM 2133 / JCM 14651 / NBRC 100331 / OCM 82 / Marburg) (Methanobacterium thermoautotrophicum).